The primary structure comprises 885 residues: MQKMHNSEYLKELSVNNISYKIYDINKAASDIDLPLKKLPYSLRVLFENVLRTGSKQNLMVFKEWLKNKKSDAEIDFMPARVLMQDFTGVPAIVDLAAMRDAMKKIGGDPLKINPLIPVDLVIDHSVSVDSYASGSSFDKNVAMEMRRNIERYQFLKWGQQAFNNFKVVPPGTGICHQVNLEYLAKVVWHSNGVAYPDSLVGTDSHTTMVNGLSVLGWGVGGIEAEAAMLGQPLTMILPEVIGVKLTGKLTGTATATDLVLKITEMLRKKKVVGKFVEFYGEGLKAMTIADRATISNMAPEYGATCGFFPIDQETIKYLELTGRDKEQIKLVEEYAKAQDLWCNFDDAAEYTDILELDLSEVTSSLAGPRRPQDRVNLGDVSSGFKKELSTFSSNNISIDTKHAVANQNYEIGNGDVVIAAITSCTNTSNPSVMIGAALLAKKAIEQGLKVKPWVKTSLAPGSKVVTEYLKSSGLNQYLDQLGFNLVGYGCTTCIGNSGPLNPEIEETINKNGLVVASVLSGNRNFEGRINPLTKASYLASPILVVAYALSGSLNIDLTNHPLGKNDKGRDVYLKDIWPSKEEIDKVIANSINSSMFVEKYSDIFSGTKEWQSLEVTSSSNYAWDKSSTYINNPPYFENIGSKNSIKDIKSARILAIFGDSITTDHISPAGSISKTSPAAKYLTDHQISPIDFNSYGSRRGNHEVMMRGTFANIRIKNEMCKGVEGGFTINQLKNMQQTIYDAAMDYKANGVSAVIFAGKEYGSGSSRDWAAKGPQLLGVKAVIAESFERIHRSNLVGMGVLPLIFTNNMTRFDLKLDGSESIDIIGLNEHIKPYNSVKCIIKKQNGEMQTIDLILQIFTDNEINYIKHGSIMHFVVENLKNNHI.

The [4Fe-4S] cluster site is built by Cys425, Cys491, and Cys494.

This sequence belongs to the aconitase/IPM isomerase family. Monomer. Requires [4Fe-4S] cluster as cofactor.

The catalysed reaction is citrate = D-threo-isocitrate. It catalyses the reaction (2S,3R)-3-hydroxybutane-1,2,3-tricarboxylate = 2-methyl-cis-aconitate + H2O. The protein operates within carbohydrate metabolism; tricarboxylic acid cycle; isocitrate from oxaloacetate: step 2/2. Its pathway is organic acid metabolism; propanoate degradation. In terms of biological role, involved in the catabolism of short chain fatty acids (SCFA) via the tricarboxylic acid (TCA)(acetyl degradation route) and probably the 2-methylcitrate cycle I (propionate degradation route). Catalyzes the reversible isomerization of citrate to isocitrate via cis-aconitate. Could catalyze the hydration of 2-methyl-cis-aconitate to yield (2R,3S)-2-methylisocitrate. The apo form of AcnA functions as a RNA-binding regulatory protein. The sequence is that of Aconitate hydratase A (acnA) from Rickettsia bellii (strain RML369-C).